The following is a 575-amino-acid chain: MKHMPRKMYSCDFETTTKVEDCRVWAYGYMNIEDHSEYKIGNSLDEFMAWVLKVQADLYFHNLKFDGAFIINWLERNGFKWSADGLPNTYNTIISRMGQWYMIDICLGYKGKRKIHTVIYDSLKKLPFPVKKIAKDFKLTVLKGDIDYHKERPVGYKITPEEYAYIKNDIQIIAEALLIQFKQGLDRMTAGSDSLKGFKDIITTKKFKKVFPTLSLGLDKEVRYAYRGGFTWLNDRFKEKEIGEGMVFDVNSLYPAQMYSRLLPYGEPIVFEGKYVWDEDYPLHIQHIRCEFELKEGYIPTIQIKRSRFYKGNEYLKSSGGEIADLWLSNVDLELMKEHYDLYNVEYISGLKFKATTGLFKDFIDKWTYIKTTSEGAIKQLAKLMLNSLYGKFASNPDVTGKVPYLKENGALGFRLGEEETKDPVYTPMGVFITAWARYTTITAAQACYDRIIYCDTDSIHLTGTEIPDVIKDIVDPKKLGYWAHESTFKRAKYLRQKTYIQDIYMKEVDGKLVEGSPDDYTDIKFSVKCAGMTDKIKKEVTFENFKVGFSRKMKPKPVQVPGGVVLVDDTFTIK.

The segment at 1–191 is 3'-5' exonuclease and strand displacement activities; the sequence is MKHMPRKMYS…KQGLDRMTAG (191 aa). Residues Asp-145 and Asp-169 each coordinate Mg(2+). The tract at residues 192-229 is involved in DNA-binding, coordination between DNA synthesis and degradation and TP interaction; the sequence is SDSLKGFKDIITTKKFKKVFPTLSLGLDKEVRYAYRGG. The initiation, polymerization and pyrophosphorolytic activities stretch occupies residues 230-562; the sequence is FTWLNDRFKE…KMKPKPVQVP (333 aa). Positions 249 and 250 each coordinate Mg(2+). Tyr-254, Lys-371, and Lys-383 together coordinate 5-methyl-UTP. Residues 398–420 form a TPR2 region; it reads DVTGKVPYLKENGALGFRLGEEE. The YCDTD motif lies at 454 to 458; it reads YCDTD. Residues Asp-456 and Asp-458 each coordinate Mg(2+). Residue Asp-458 participates in 5-methyl-UTP binding. The tract at residues 563–575 is involved in DNA-binding and TP interaction; it reads GGVVLVDDTFTIK.

The protein belongs to the DNA polymerase type-B family. Interacts with the primer terminal protein; this interaction allows the initiation of TP-primed DNA replication at both viral DNA ends. Interacts with DNA. It depends on Mg(2+) as a cofactor.

It catalyses the reaction DNA(n) + a 2'-deoxyribonucleoside 5'-triphosphate = DNA(n+1) + diphosphate. In terms of biological role, polymerase responsible for protein-primed viral DNA replication by strand displacement with high processivity and fidelity. To start replication, the DNA polymerase forms a heterodimer with a free primer terminal protein (TP), recognizes the replication origins at both 5' ends of the linear chromosome, and initiates replication using as primer the OH-group of Ser-232 of the TP. This polymerase possesses three enzymatic activities: DNA synthesis (polymerase), primer terminal protein (TP) deoxynucleotidylation, which is the formation of a covalent linkage (phosphoester) between the hydroxyl group of a specific serine residue in TP and 5'-dAMP, a reaction directed by the second T at the 3' end, and 3' to 5' exonuclease activity. Exonuclease activity has a proofreading purpose. DNA polymerase edits the polymerization errors using an intramolecular pathway as the primer terminus travels from one active site to the other without dissociation from the DNA. DNA polymerization catalyzed by the DNA polymerase is a highly accurate process, but the protein-primed initiation is a quite inaccurate reaction. Since the polymerase initiates the replication on the second thymine, the TP-dAMP initiation product translocates backwards to recover the template information of the first nucleotide (sliding back-mechanism). The polypeptide is DNA polymerase (2) (Bacillus subtilis (Bacteriophage phi-29)).